We begin with the raw amino-acid sequence, 259 residues long: MIKHVLLFFVFISFSVSANDFFRADSRTPDEIRRAGGLLPRGQQEAYERGTPININLYEHARGTVTGNTRYNDGYVSTTVTLRQAHLIGQNILGSYNEYYIYVVAPAPNLFDVNGVLGRYSPYPSENEFAALGGIPLSQIIGWYRVSFGAIEGGMQRNRDYRGDLFRGLTVAPNEDGYQLAGFPSNFPAWREMPWSTFAPEQCVPNNKEFKGGVCISATNVLSKYDLMNFKKLLKRRLALTFFMSEDDFIGVHGERDEL.

The signal sequence occupies residues 1-18; that stretch reads MIKHVLLFFVFISFSVSA. Residue 23–37 participates in NAD(+) binding; the sequence is RADSRTPDEIRRAGG. Residue Glu-128 is part of the active site. A disulfide bridge connects residues Cys-203 and Cys-215.

It belongs to the enterotoxin A family. In terms of assembly, heterohexamer of one A chain and of five B chains.

Its function is as follows. The biological activity of the toxin is produced by the A chain, which activates intracellular adenyl cyclase. The protein is Heat-labile enterotoxin IIA, A chain of Escherichia coli.